An 880-amino-acid polypeptide reads, in one-letter code: Alanine--tRNA ligase (880 aa).

Residues histidine 548, histidine 552, cysteine 651, and histidine 655 each contribute to the Zn(2+) site.

It belongs to the class-II aminoacyl-tRNA synthetase family. It depends on Zn(2+) as a cofactor.

It is found in the cytoplasm. The catalysed reaction is tRNA(Ala) + L-alanine + ATP = L-alanyl-tRNA(Ala) + AMP + diphosphate. Catalyzes the attachment of alanine to tRNA(Ala) in a two-step reaction: alanine is first activated by ATP to form Ala-AMP and then transferred to the acceptor end of tRNA(Ala). Also edits incorrectly charged Ser-tRNA(Ala) and Gly-tRNA(Ala) via its editing domain. The chain is Alanine--tRNA ligase from Tropheryma whipplei (strain TW08/27) (Whipple's bacillus).